The sequence spans 350 residues: Protein RecA (350 aa).

ATP is bound at residue 66–73 (GPESSGKT).

The protein belongs to the RecA family.

The protein resides in the cytoplasm. In terms of biological role, can catalyze the hydrolysis of ATP in the presence of single-stranded DNA, the ATP-dependent uptake of single-stranded DNA by duplex DNA, and the ATP-dependent hybridization of homologous single-stranded DNAs. It interacts with LexA causing its activation and leading to its autocatalytic cleavage. This Nocardioides sp. (strain ATCC BAA-499 / JS614) protein is Protein RecA.